The following is a 248-amino-acid chain: Inner membrane protein pE248R (248 aa).

Glycine 2 carries N-myristoyl glycine; by host lipidation. Residues 2–199 (GGSTSKNSFK…ADAISAVFKN (198 aa)) are Cytoplasmic-facing. Residues 200 to 220 (IMVAAVVIVLIIVGFIAVFYF) form a helical membrane-spanning segment. Topologically, residues 221–248 (LHSRHRHEEEEEAEPLISNKVLKNAAVS) are extracellular.

This sequence belongs to the asfivirus E248R family. In terms of assembly, interacts with A151R.

It localises to the host membrane. The protein localises to the virion membrane. Its function is as follows. Essential for viral fusion with host endosomal membrane and core release. The sequence is that of Inner membrane protein pE248R from African swine fever virus (strain Badajoz 1971 Vero-adapted) (Ba71V).